The primary structure comprises 215 residues: uncharacterized protein (215 aa).

Positions 1–17 are cleaved as a signal peptide; that stretch reads MKKVLASATILSLMLVG. A disordered region spans residues 17 to 110; sequence GCSNGGNDES…NKQQQSVQDN (94 aa). A lipid anchor (N-palmitoyl cysteine) is attached at Cys-18. Cys-18 is lipidated: S-diacylglycerol cysteine. The span at 25–69 shows a compositional bias: basic and acidic residues; the sequence is ESSHKDDSSKTEQKDKSSSQHDSKKDSKRNDTNNKQDNQENKSNK. Residues 70–95 show a composition bias toward polar residues; it reads EQTSNQNSNAGEQRTSERPTTNSNGI. Over residues 96–110 the composition is skewed to low complexity; sequence SSDNQNKQQQSVQDN.

The protein localises to the cell membrane. This is an uncharacterized protein from Staphylococcus epidermidis (strain ATCC 12228 / FDA PCI 1200).